Reading from the N-terminus, the 361-residue chain is MKERLDNLRKRLVEVEKEVENPNLIKDVAKYKETMREHSYLSKLMEEYDNYLSIEKQIEDSKLLIQEESDAELKEMAREELHSLEAAFEKSEADLKMLLIPPDPLEEKNIIMEIRGGTGGDEAALFAADLFRMYTHYAEMKNWKYEVLSLNETELGGYKEITFSISGKYVYGSLRYESGVHRVQRVPETEGSGRIHTSAVTVAVLPEAEETEIEINQEDLRIDVMRAGGPGGQCVNTTDSAVRITHIPTGLVVICQDEKSQIKNKAKAMRVLRSRLYDLEESKKQAERAQNRKSQVGSGDRSERIRTYNFPQNRVTDHRINLTLYKLDAVMQGSLDELIDALCIAAREEMMKAADHHLEHK.

An N5-methylglutamine modification is found at Gln233. Positions 282-310 (SKKQAERAQNRKSQVGSGDRSERIRTYNF) are disordered.

It belongs to the prokaryotic/mitochondrial release factor family. In terms of processing, methylated by PrmC. Methylation increases the termination efficiency of RF1.

It is found in the cytoplasm. In terms of biological role, peptide chain release factor 1 directs the termination of translation in response to the peptide chain termination codons UAG and UAA. This Treponema denticola (strain ATCC 35405 / DSM 14222 / CIP 103919 / JCM 8153 / KCTC 15104) protein is Peptide chain release factor 1.